The sequence spans 251 residues: DNA repair protein RecO (251 aa).

This sequence belongs to the RecO family.

Functionally, involved in DNA repair and RecF pathway recombination. The protein is DNA repair protein RecO of Acetivibrio thermocellus (strain ATCC 27405 / DSM 1237 / JCM 9322 / NBRC 103400 / NCIMB 10682 / NRRL B-4536 / VPI 7372) (Clostridium thermocellum).